The sequence spans 121 residues: Small ribosomal subunit protein uS13 (121 aa).

Residues 95–121 (LPVRGQNTKNNARTRKGKAVAIAGKKK) form a disordered region. Over residues 106–121 (ARTRKGKAVAIAGKKK) the composition is skewed to basic residues.

The protein belongs to the universal ribosomal protein uS13 family. In terms of assembly, part of the 30S ribosomal subunit. Forms a loose heterodimer with protein S19. Forms two bridges to the 50S subunit in the 70S ribosome.

Functionally, located at the top of the head of the 30S subunit, it contacts several helices of the 16S rRNA. In the 70S ribosome it contacts the 23S rRNA (bridge B1a) and protein L5 of the 50S subunit (bridge B1b), connecting the 2 subunits; these bridges are implicated in subunit movement. Contacts the tRNAs in the A and P-sites. The protein is Small ribosomal subunit protein uS13 of Streptococcus equi subsp. zooepidemicus (strain H70).